A 275-amino-acid chain; its full sequence is Myoblast determination protein 1 homolog (275 aa).

The bHLH domain occupies 84–135; the sequence is DRRKAATMRERRRLSKVNDAFETLKRCTSTNPNQRLPKVEILRNAISYIESL. Residues 234 to 275 form a disordered region; the sequence is EGHEESPCSPHEGSVLSDTGTTAPSPTSCPQQQAQETIYQVL. The span at 249–275 shows a compositional bias: polar residues; the sequence is LSDTGTTAPSPTSCPQQQAQETIYQVL.

As to quaternary structure, efficient DNA binding requires dimerization with another bHLH protein. In terms of tissue distribution, from mid-gastrula to just before somite formation, expressed in cells adjacent to axial mesoderm. Subsequently, during the anterior-to-posterior wave of somite formation and maturation, expressed within particular regions of each somite. Expressed in both muscle and non-muscle cells.

Its subcellular location is the nucleus. Functionally, may act as a transcriptional activator that promotes transcription of muscle-specific target genes and plays a role in muscle differentiation. The polypeptide is Myoblast determination protein 1 homolog (myod1) (Danio rerio (Zebrafish)).